The primary structure comprises 125 residues: MIDAPRIIVQVQSVYAGSQSLPEEARFVFAYTVTLRNLGRFNVQLLRRYWLITNGNGRQTEVQGEGVIGEQPLIQPNGEFQYTSGAIIETPCGTMEGHYEMVDHQGHTFRIAIPVFRLAIPSLIN.

The region spanning 1–125 (MIDAPRIIVQ…FRLAIPSLIN (125 aa)) is the ApaG domain.

This is Protein ApaG from Edwardsiella ictaluri (strain 93-146).